The primary structure comprises 296 residues: MNLQTMIRTLQDYWSEQGCIMLQSYDVEKGAGTMSPYTFLKAIGPEPWKAGYVEPSRRPADGRYGENPNRLFQHHQFQVVMKPSPDNIQELYLGSLEKLGINPLEHDIRFVEDNWENPSLGCAGLGWEVWLDGMEITQFTYFQQVGGLECFPVTSEITYGVERLASYIQDKENVFDLEWTEGISYRDIFFQAEFENSTYAFETSNTDMLLTLFDTYEREATRQMQDGLVFPAYDYVLKCSHTFNLLDARGVVSVTERAQYIGRIRNLARRIAKTFYESREKLGFPLLKEEGGKRHE.

It belongs to the class-II aminoacyl-tRNA synthetase family. Tetramer of two alpha and two beta subunits.

It is found in the cytoplasm. It carries out the reaction tRNA(Gly) + glycine + ATP = glycyl-tRNA(Gly) + AMP + diphosphate. This chain is Glycine--tRNA ligase alpha subunit, found in Listeria monocytogenes serotype 4a (strain HCC23).